We begin with the raw amino-acid sequence, 277 residues long: Probable enoyl-CoA hydratase, mitochondrial (277 aa).

Residues 1-42 (MLKQVIKTVSSSQAPKKYFFKQFCTSTTEKKGRVGLVTLNRP) constitute a mitochondrion transit peptide. Substrate-binding positions include 85 to 88 (ADIK) and glycine 128.

It belongs to the enoyl-CoA hydratase/isomerase family. As to quaternary structure, homohexamer; dimer of trimers.

The protein resides in the mitochondrion matrix. It catalyses the reaction a (3S)-3-hydroxyacyl-CoA = a (2E)-enoyl-CoA + H2O. The catalysed reaction is a 4-saturated-(3S)-3-hydroxyacyl-CoA = a (3E)-enoyl-CoA + H2O. The enzyme catalyses (3S)-3-hydroxybutanoyl-CoA = (2E)-butenoyl-CoA + H2O. It carries out the reaction 3-hydroxyisovaleryl-CoA = 3-methylbut-2-enoyl-CoA + H2O. It catalyses the reaction 3-hydroxypropanoyl-CoA = acryloyl-CoA + H2O. The catalysed reaction is 3-hydroxybutanoyl-CoA = (2E)-butenoyl-CoA + H2O. The protein operates within lipid metabolism; fatty acid beta-oxidation. In terms of biological role, straight-chain enoyl-CoA thioesters from C4 up to at least C16 are processed, although with decreasing catalytic rate. The sequence is that of Probable enoyl-CoA hydratase, mitochondrial (echs1) from Dictyostelium discoideum (Social amoeba).